The primary structure comprises 74 residues: Translational regulator CsrA (74 aa).

Belongs to the CsrA/RsmA family. Homodimer; the beta-strands of each monomer intercalate to form a hydrophobic core, while the alpha-helices form wings that extend away from the core.

The protein resides in the cytoplasm. Functionally, a translational regulator that binds mRNA to regulate translation initiation and/or mRNA stability. Usually binds in the 5'-UTR at or near the Shine-Dalgarno sequence preventing ribosome-binding, thus repressing translation. Its main target seems to be the major flagellin gene, while its function is anatagonized by FliW. The chain is Translational regulator CsrA from Alkaliphilus oremlandii (strain OhILAs) (Clostridium oremlandii (strain OhILAs)).